Reading from the N-terminus, the 522-residue chain is Putative malate dehydrogenase 1B (522 aa).

The segment at 495–522 (EETEKSSSEDTPEAAAAAVSTGDETVPS) is disordered.

The protein belongs to the LDH/MDH superfamily. MDH type 2 family.

This chain is Putative malate dehydrogenase 1B (MDH1B), found in Branchiostoma floridae (Florida lancelet).